The chain runs to 1028 residues: Beta-galactosidase (1028 aa).

The substrate site is built by Asn104 and Asp203. Asp203 contributes to the Na(+) binding site. Residues Glu418, His420, and Glu463 each coordinate Mg(2+). Residues Glu463 and 539–542 each bind substrate; that span reads EYAH. The Proton donor role is filled by Glu463. Glu539 acts as the Nucleophile in catalysis. A Mg(2+)-binding site is contributed by Asn599. Phe603 and Asn606 together coordinate Na(+). Residues Asn606 and Trp1004 each contribute to the substrate site.

The protein belongs to the glycosyl hydrolase 2 family. As to quaternary structure, homodimer. Mg(2+) is required as a cofactor. The cofactor is Mn(2+). Fe cation serves as cofactor. Requires Na(+) as cofactor. It depends on K(+) as a cofactor.

The enzyme catalyses Hydrolysis of terminal non-reducing beta-D-galactose residues in beta-D-galactosides.. Completely inhibited by Hg(2+), Cu(2+) Ag(2+), and partially inhibited by Zn(2+), imidazole and EDTA. Activated by Ca(2+), Co(2+), Ni(2+). Its function is as follows. This beta-galactosidase is also able to catalyze glycosyl transfer to a series of acceptors, including hexose, pentose, beta- or alpha-disaccharides, hexahydroxy alcohol, cyclitol, and aromatic glycosides, resulting in the production of galacto-oligosaccharides (GOS). The protein is Beta-galactosidase (lacZ) of Enterobacter agglomerans (Erwinia herbicola).